Here is a 441-residue protein sequence, read N- to C-terminus: ATP-dependent protease ATPase subunit HslU (441 aa).

Residues I18, 60–65 (GVGKTE), D254, E319, and R391 contribute to the ATP site.

This sequence belongs to the ClpX chaperone family. HslU subfamily. As to quaternary structure, a double ring-shaped homohexamer of HslV is capped on each side by a ring-shaped HslU homohexamer. The assembly of the HslU/HslV complex is dependent on binding of ATP.

It localises to the cytoplasm. In terms of biological role, ATPase subunit of a proteasome-like degradation complex; this subunit has chaperone activity. The binding of ATP and its subsequent hydrolysis by HslU are essential for unfolding of protein substrates subsequently hydrolyzed by HslV. HslU recognizes the N-terminal part of its protein substrates and unfolds these before they are guided to HslV for hydrolysis. The protein is ATP-dependent protease ATPase subunit HslU of Shewanella loihica (strain ATCC BAA-1088 / PV-4).